The following is a 351-amino-acid chain: MSVWTTANNSGLETPTKSPITSSVPRAARSSAVITTGNHQQHHFQHVVAAAVAAATSVATGHQFQQQFPLHAHPHPQHHSNSPTGSGSNSNNSAGFQRTSISNSLLQFPPPPPPSSQNQAKPRGHHRTASSSMSQSGEDLHSPTYLSWRKLQLSRAKLKASSKTSALLSGFAMVAMVEVQLDHDTNVPPGMLIAFAICTTLLVAVHMLALMISTCILPNIETVCNLHSISLVHESPHERLHWYIETAWAFSTLLGLILFLLEIAILCWVKFYDLSPPAAWSACVVLIPVMIIFMAFAIHFYRSLVSHKYEVTVSGIRELEMLKEQMEQDHLEHHNNIRNNGMNYGASGDIV.

A compositionally biased stretch (polar residues) spans 1 to 21 (MSVWTTANNSGLETPTKSPIT). Disordered regions lie at residues 1–39 (MSVW…TGNH) and 71–141 (HAHP…EDLH). The Cytoplasmic portion of the chain corresponds to 1–163 (MSVWTTANNS…SRAKLKASSK (163 aa)). Low complexity-rich tracts occupy residues 22–33 (SSVPRAARSSAV) and 80–93 (SNSP…SNNS). Residues 94 to 106 (AGFQRTSISNSLL) are compositionally biased toward polar residues. A helical membrane pass occupies residues 164 to 181 (TSALLSGFAMVAMVEVQL). Over 182–191 (DHDTNVPPGM) the chain is Extracellular. The helical transmembrane segment at 192–212 (LIAFAICTTLLVAVHMLALMI) threads the bilayer. At 213-248 (STCILPNIETVCNLHSISLVHESPHERLHWYIETAW) the chain is on the cytoplasmic side. Residues 249–269 (AFSTLLGLILFLLEIAILCWV) form a helical membrane-spanning segment. Topologically, residues 270–277 (KFYDLSPP) are extracellular. Residues 278 to 298 (AAWSACVVLIPVMIIFMAFAI) traverse the membrane as a helical segment. Topologically, residues 299–351 (HFYRSLVSHKYEVTVSGIRELEMLKEQMEQDHLEHHNNIRNNGMNYGASGDIV) are cytoplasmic.

It belongs to the Orai family. Hexamer.

The protein localises to the cell membrane. The catalysed reaction is Ca(2+)(in) = Ca(2+)(out). Functionally, pore-forming subunit of inward rectifying Ca(2+) release-activated Ca(2+) (CRAC) channels. Assembles in hexameric CRAC channels that mediate Ca(2+) influx upon depletion of endoplasmic reticulum Ca(2+) store and channel activation by Ca(2+) sensor Stim, a process known as store-operated Ca(2+) entry (SOCE). Regulates transcription factor NFAT nuclear import. The sequence is that of Calcium release-activated calcium channel protein 1 from Drosophila melanogaster (Fruit fly).